The chain runs to 364 residues: S-adenosylmethionine:tRNA ribosyltransferase-isomerase (364 aa).

The tract at residues 344-364 is disordered; the sequence is ASDKMQETSGRGERPRFDHEI.

This sequence belongs to the QueA family. Monomer.

The protein resides in the cytoplasm. The enzyme catalyses 7-aminomethyl-7-carbaguanosine(34) in tRNA + S-adenosyl-L-methionine = epoxyqueuosine(34) in tRNA + adenine + L-methionine + 2 H(+). It participates in tRNA modification; tRNA-queuosine biosynthesis. Its function is as follows. Transfers and isomerizes the ribose moiety from AdoMet to the 7-aminomethyl group of 7-deazaguanine (preQ1-tRNA) to give epoxyqueuosine (oQ-tRNA). In Thioalkalivibrio sulfidiphilus (strain HL-EbGR7), this protein is S-adenosylmethionine:tRNA ribosyltransferase-isomerase.